The primary structure comprises 107 residues: Ornithine carbamoyltransferase, catabolic (107 aa).

Carbamoyl phosphate contacts are provided by residues 57 to 61 (STRTR) and glutamine 84.

Belongs to the aspartate/ornithine carbamoyltransferase superfamily. OTCase family.

The protein resides in the cytoplasm. The enzyme catalyses carbamoyl phosphate + L-ornithine = L-citrulline + phosphate + H(+). The protein operates within amino-acid degradation; L-arginine degradation via ADI pathway; carbamoyl phosphate from L-arginine: step 2/2. This Streptococcus pyogenes protein is Ornithine carbamoyltransferase, catabolic (arcB).